The primary structure comprises 211 residues: Imidazole glycerol phosphate synthase subunit HisH (211 aa).

A Glutamine amidotransferase type-1 domain is found at 3–211 (VIAVIDYDMG…VNQIRVKAIA (209 aa)). The active-site Nucleophile is the C81. Catalysis depends on residues H186 and E188.

Heterodimer of HisH and HisF.

It is found in the cytoplasm. It carries out the reaction 5-[(5-phospho-1-deoxy-D-ribulos-1-ylimino)methylamino]-1-(5-phospho-beta-D-ribosyl)imidazole-4-carboxamide + L-glutamine = D-erythro-1-(imidazol-4-yl)glycerol 3-phosphate + 5-amino-1-(5-phospho-beta-D-ribosyl)imidazole-4-carboxamide + L-glutamate + H(+). It catalyses the reaction L-glutamine + H2O = L-glutamate + NH4(+). It functions in the pathway amino-acid biosynthesis; L-histidine biosynthesis; L-histidine from 5-phospho-alpha-D-ribose 1-diphosphate: step 5/9. Functionally, IGPS catalyzes the conversion of PRFAR and glutamine to IGP, AICAR and glutamate. The HisH subunit catalyzes the hydrolysis of glutamine to glutamate and ammonia as part of the synthesis of IGP and AICAR. The resulting ammonia molecule is channeled to the active site of HisF. The sequence is that of Imidazole glycerol phosphate synthase subunit HisH from Gloeothece citriformis (strain PCC 7424) (Cyanothece sp. (strain PCC 7424)).